Consider the following 318-residue polypeptide: uncharacterized protein (318 aa).

It belongs to the glycosyltransferase 2 family.

This is an uncharacterized protein from Rickettsia typhi (strain ATCC VR-144 / Wilmington).